The sequence spans 36 residues: Phospholipase A2 hemilipin-2 (36 aa).

The protein belongs to the phospholipase A2 family. Group III subfamily. Heterodimer composed of a small subunit and a large subunit; disulfid-linked. Requires Ca(2+) as cofactor. Expressed by the venom gland.

It localises to the secreted. It carries out the reaction a 1,2-diacyl-sn-glycero-3-phosphocholine + H2O = a 1-acyl-sn-glycero-3-phosphocholine + a fatty acid + H(+). Scorpion venom phospholipase A2 (PLA2) that impacts angiogenesis in vitro and in vivo without showing any cytotoxic or apoptotic signs. The antiangiogenic effect is independent from the catalytic activity and seems to be held by its small subunit. PLA2 catalyzes the calcium-dependent hydrolysis of the 2-acyl groups in 3-sn-phosphoglycerides. The polypeptide is Phospholipase A2 hemilipin-2 (Hemiscorpius lepturus (Scorpion)).